The primary structure comprises 338 residues: MIRVAINGYGRIGRSILRALYESGKRQQIQIVAINELAKPEAIIHLTQYDTTHGRFQPRVKLVDGQMQIGDDTIKIFHEPDPAKLPWRELDIDIVYEATGAILDRQSCEAHIHAGAKQVLISHPSSADVDGTIVYGVNHDLLRAEHTVVSNASCTTNCIVPVIDVLDKHFGVKSGAITTIHSAMNDQQVIDAYHDDLRRTRAAGQSIIPVDTKLARGIERILPHMKDKFEAISVRVPTINVTAIDLSVTLDKTVDIATVNQVLELAANGRFNGILGYTDEPLVSCDFNHDPRSSIVDGTQTRVSAGQLVKLLLWCDNEWGFANRMLDTSLAMIAAKQS.

11–12 (RI) contacts NAD(+). Substrate-binding positions include 153-155 (SCT), Arg199, 212-213 (TK), and Arg235. The active-site Nucleophile is the Cys154. Residue Asn317 coordinates NAD(+).

Belongs to the glyceraldehyde-3-phosphate dehydrogenase family. Epd subfamily. In terms of assembly, homotetramer.

It is found in the cytoplasm. The catalysed reaction is D-erythrose 4-phosphate + NAD(+) + H2O = 4-phospho-D-erythronate + NADH + 2 H(+). The protein operates within cofactor biosynthesis; pyridoxine 5'-phosphate biosynthesis; pyridoxine 5'-phosphate from D-erythrose 4-phosphate: step 1/5. Catalyzes the NAD-dependent conversion of D-erythrose 4-phosphate to 4-phosphoerythronate. The chain is D-erythrose-4-phosphate dehydrogenase from Shewanella oneidensis (strain ATCC 700550 / JCM 31522 / CIP 106686 / LMG 19005 / NCIMB 14063 / MR-1).